A 215-amino-acid chain; its full sequence is Cytochrome b6 (215 aa).

A helical transmembrane segment spans residues 32–52; that stretch reads IFYCLGGITLTCFLVQVATGF. Residue Cys35 participates in heme c binding. 2 residues coordinate heme b: His86 and His100. 3 consecutive transmembrane segments (helical) span residues 90-110, 116-136, and 186-206; these read ASMM…TGGF, LTWV…VTGY, and LHTF…FPMI. Heme b is bound by residues His187 and His202.

Belongs to the cytochrome b family. PetB subfamily. In terms of assembly, the 4 large subunits of the cytochrome b6-f complex are cytochrome b6, subunit IV (17 kDa polypeptide, PetD), cytochrome f and the Rieske protein, while the 4 small subunits are PetG, PetL, PetM and PetN. The complex functions as a dimer. Heme b serves as cofactor. Heme c is required as a cofactor.

The protein localises to the plastid. Its subcellular location is the chloroplast thylakoid membrane. In terms of biological role, component of the cytochrome b6-f complex, which mediates electron transfer between photosystem II (PSII) and photosystem I (PSI), cyclic electron flow around PSI, and state transitions. The polypeptide is Cytochrome b6 (Vitis vinifera (Grape)).